Reading from the N-terminus, the 96-residue chain is Teretoxin Tgu6.1 (96 aa).

The signal sequence occupies residues 1–16 (MRPFLVFVLIVSVSLA). Positions 17-52 (FSFEDMPNKGGDSVASITADQARGHKRNPLFPFAQR) are excised as a propeptide.

In terms of processing, contains 3 disulfide bonds. In terms of tissue distribution, expressed by the venom duct.

Its subcellular location is the secreted. In terms of biological role, the recombinant protein causes paralysis to polychaete worms (Nereis virens), the natural prey of terebrid snails. The protein is Teretoxin Tgu6.1 of Terebra guttata (White spotted auger snail).